A 253-amino-acid polypeptide reads, in one-letter code: MTTIDLNCDLGESFGAYKMGNDDEILPFVSSINVACGFHAGDPSVMRQTVEKAMQHNVAIGAHPGFPDLIGFGRRNMNVSASEVYDYVLYQIGALDTFVKAAGGKMHHVKPHGALYNMAATNPEIADAIAKAIYHSNPSLLFYGLANSEAFIQAAEKYNITLVQEAFADRTYKQDGTLTSRTEENALIKNEEEAIKQVLQMVKEGYVNSVNGEKVAVQAQTICLHGDGEKAVQFARRIYRTFENNEISICTPK.

It belongs to the LamB/PxpA family. In terms of assembly, forms a complex composed of PxpA, PxpB and PxpC.

It carries out the reaction 5-oxo-L-proline + ATP + 2 H2O = L-glutamate + ADP + phosphate + H(+). In terms of biological role, catalyzes the cleavage of 5-oxoproline to form L-glutamate coupled to the hydrolysis of ATP to ADP and inorganic phosphate. The chain is 5-oxoprolinase subunit A from Bacillus cereus (strain ZK / E33L).